Consider the following 785-residue polypeptide: Endonuclease MutS2 (785 aa).

ATP is bound at residue 332–339 (GPNTGGKT). A Smr domain is found at 710 to 785 (VDLRGMDSEE…GNGVTVVELK (76 aa)).

Belongs to the DNA mismatch repair MutS family. MutS2 subfamily. As to quaternary structure, homodimer. Binds to stalled ribosomes, contacting rRNA.

Endonuclease that is involved in the suppression of homologous recombination and thus may have a key role in the control of bacterial genetic diversity. Its function is as follows. Acts as a ribosome collision sensor, splitting the ribosome into its 2 subunits. Detects stalled/collided 70S ribosomes which it binds and splits by an ATP-hydrolysis driven conformational change. Acts upstream of the ribosome quality control system (RQC), a ribosome-associated complex that mediates the extraction of incompletely synthesized nascent chains from stalled ribosomes and their subsequent degradation. Probably generates substrates for RQC. The polypeptide is Endonuclease MutS2 (Clostridium novyi (strain NT)).